A 485-amino-acid chain; its full sequence is GTPase Obg (485 aa).

The Obg domain occupies 2-159 (PRFVDRVVIH…RELTLELKTV (158 aa)). The OBG-type G domain occupies 160 to 341 (ADVGLIGFPS…FIFALWDMVR (182 aa)). GTP is bound by residues 166–173 (GFPSAGKS), 191–195 (FTTLV), 212–215 (DVPG), 292–295 (NKID), and 322–324 (STV). 2 residues coordinate Mg(2+): Ser173 and Thr193. In terms of domain architecture, OCT spans 359 to 437 (PIAVDETGFS…IGDMTFDWEP (79 aa)). The disordered stretch occupies residues 439–485 (TPAGVDVQMSGRGTDTRLEQTDRVSAAERKIARRERRQSTDEPGGEE). Basic and acidic residues predominate over residues 452 to 468 (TDTRLEQTDRVSAAERK).

This sequence belongs to the TRAFAC class OBG-HflX-like GTPase superfamily. OBG GTPase family. As to quaternary structure, monomer. Mg(2+) is required as a cofactor.

It is found in the cytoplasm. An essential GTPase which binds GTP, GDP and possibly (p)ppGpp with moderate affinity, with high nucleotide exchange rates and a fairly low GTP hydrolysis rate. Plays a role in control of the cell cycle, stress response, ribosome biogenesis and in those bacteria that undergo differentiation, in morphogenesis control. This Mycobacterium sp. (strain MCS) protein is GTPase Obg.